A 175-amino-acid polypeptide reads, in one-letter code: MDLRALIRLVPDFPRPGILFRDMTPLLQDPAGFRAAIEQLAAGTTGMGSLDYVVGIESRGFILGAALAQHLGLGFVPVRKPGKLPPPVLSQTYSLEYGQDQLQLHAHALRPGERVLIVDDVIATGGTAAATAQLVAQSGAEVGGFAFLIELAFLSGCKALPPGIPAHVVMVEEGN.

Belongs to the purine/pyrimidine phosphoribosyltransferase family. As to quaternary structure, homodimer.

Its subcellular location is the cytoplasm. The enzyme catalyses AMP + diphosphate = 5-phospho-alpha-D-ribose 1-diphosphate + adenine. It participates in purine metabolism; AMP biosynthesis via salvage pathway; AMP from adenine: step 1/1. Catalyzes a salvage reaction resulting in the formation of AMP, that is energically less costly than de novo synthesis. The polypeptide is Adenine phosphoribosyltransferase (Synechococcus sp. (strain JA-2-3B'a(2-13)) (Cyanobacteria bacterium Yellowstone B-Prime)).